The chain runs to 234 residues: Ribonuclease 3 (234 aa).

The RNase III domain occupies 4-133 (LLDLEHKLNY…ILGAVYIDSN (130 aa)). Position 46 (glutamate 46) interacts with Mg(2+). Residue aspartate 50 is part of the active site. Positions 119 and 122 each coordinate Mg(2+). Glutamate 122 is an active-site residue. Residues 160–228 (DFKSILQEYV…AKALCIKLGV (69 aa)) form the DRBM domain.

This sequence belongs to the ribonuclease III family. Homodimer. It depends on Mg(2+) as a cofactor.

The protein resides in the cytoplasm. The catalysed reaction is Endonucleolytic cleavage to 5'-phosphomonoester.. In terms of biological role, digests double-stranded RNA. Involved in the processing of primary rRNA transcript to yield the immediate precursors to the large and small rRNAs (23S and 16S). Processes some mRNAs, and tRNAs when they are encoded in the rRNA operon. Processes pre-crRNA and tracrRNA of type II CRISPR loci if present in the organism. The polypeptide is Ribonuclease 3 (Fusobacterium nucleatum subsp. nucleatum (strain ATCC 25586 / DSM 15643 / BCRC 10681 / CIP 101130 / JCM 8532 / KCTC 2640 / LMG 13131 / VPI 4355)).